Here is a 289-residue protein sequence, read N- to C-terminus: Glucosamine-6-phosphate deaminase 1 (289 aa).

Lys64 carries the N6-acetyllysine modification. The active-site Proton acceptor; for enolization step is the Asp72. Asp141 acts as the For ring-opening step in catalysis. Catalysis depends on His143, which acts as the Proton acceptor; for ring-opening step. Glu148 serves as the catalytic For ring-opening step. The residue at position 161 (Thr161) is a Phosphothreonine.

Belongs to the glucosamine/galactosamine-6-phosphate isomerase family. Homohexamer.

Its subcellular location is the cytoplasm. It catalyses the reaction alpha-D-glucosamine 6-phosphate + H2O = beta-D-fructose 6-phosphate + NH4(+). It participates in nucleotide-sugar biosynthesis; UDP-N-acetyl-alpha-D-glucosamine biosynthesis; alpha-D-glucosamine 6-phosphate from D-fructose 6-phosphate: step 1/1. With respect to regulation, allosterically activated by N-acetylglucosamine-6-phosphate (GlcNAc6P). Catalyzes the reversible conversion of alpha-D-glucosamine 6-phosphate (GlcN-6P) into beta-D-fructose 6-phosphate (Fru-6P) and ammonium ion, a regulatory reaction step in de novo uridine diphosphate-N-acetyl-alpha-D-glucosamine (UDP-GlcNAc) biosynthesis via hexosamine pathway. Deamination is coupled to aldo-keto isomerization mediating the metabolic flux from UDP-GlcNAc toward Fru-6P. At high ammonium level can drive amination and isomerization of Fru-6P toward hexosamines and UDP-GlcNAc synthesis. Has a role in fine tuning the metabolic fluctuations of cytosolic UDP-GlcNAc and their effects on hyaluronan synthesis that occur during tissue remodeling. Seems to trigger calcium oscillations in mammalian eggs. These oscillations serve as the essential trigger for egg activation and early development of the embryo. This Pongo abelii (Sumatran orangutan) protein is Glucosamine-6-phosphate deaminase 1.